Consider the following 124-residue polypeptide: Large ribosomal subunit protein bL12 (124 aa).

The disordered stretch occupies residues 94–124 (APKPVKESVPKAAAEEAKKKLEEAGAKAEIK).

This sequence belongs to the bacterial ribosomal protein bL12 family. In terms of assembly, homodimer. Part of the ribosomal stalk of the 50S ribosomal subunit. Forms a multimeric L10(L12)X complex, where L10 forms an elongated spine to which 2 to 4 L12 dimers bind in a sequential fashion. Binds GTP-bound translation factors.

Its function is as follows. Forms part of the ribosomal stalk which helps the ribosome interact with GTP-bound translation factors. Is thus essential for accurate translation. The sequence is that of Large ribosomal subunit protein bL12 from Paraburkholderia phytofirmans (strain DSM 17436 / LMG 22146 / PsJN) (Burkholderia phytofirmans).